The chain runs to 773 residues: Circadian clock protein PASD1 (773 aa).

The 73-residue stretch at 30–102 (YDYFNQVTLQ…IILKFPLLNS (73 aa)) folds into the PAS domain. The disordered stretch occupies residues 313–361 (SVDQEGPMDQQDPENPVAPLDQAGLMDPVDPEDSVDLGAAGASAQPLQP). Positions 365 to 412 (VAYDIISQELELMKKLKEQLEERTWLLHDAIQNQQNALELMMDHLQKQ) are necessary for transcriptional repression. The stretch at 365–412 (VAYDIISQELELMKKLKEQLEERTWLLHDAIQNQQNALELMMDHLQKQ) forms a coiled coil. Disordered stretches follow at residues 427 to 448 (SEAV…PLPH), 506 to 569 (QRKV…QLQE), and 732 to 773 (GVEG…NKPC). A coiled-coil region spans residues 475–553 (VAFNQQQLVQ…QERKKWQGQM (79 aa)). Positions 506 to 536 (QRKVQKQKKMQEKKKLQEQKMQEKKKLQEQR) are enriched in basic and acidic residues.

As to quaternary structure, interacts with the CLOCK-BMAL1 heterodimer; this interaction inhibits CLOCK-BMAL1 transcriptional activation and suppress circadian timekeeping. Interacts with BMAL1. As to expression, testis-specific. Expressed in a broad range of cancer cells, including melanoma, lung cancer, and breast cancer (at protein level). Testis-specific. Found in histologically normal tissues from patients with uterus, lung and small intestine cancers. Widespread expression seen in solid tumors and diffuse large B-cell lymphoma (DLBCL)-derived cell lines. Isoform 2 is expressed in all DLBCL-derived cell lines, while isoform 1 is preferentially expressed in cell lines derived from non-germinal center DLBCL.

Its subcellular location is the nucleus. Functions as a suppressor of the biological clock that drives the daily circadian rhythms of cells throughout the body. Acts as a nuclear repressor of the CLOCK-BMAL1 heterodimer-mediated transcriptional activation of the core clock components. Inhibits circadian clock function in cancer cells, when overexpressed. This chain is Circadian clock protein PASD1, found in Homo sapiens (Human).